An 894-amino-acid chain; its full sequence is MSRFYRRGASDSDTDSSEDEVEELKANKSAKFRDDLDFMAGPEEDEKRVVRAQKDKKFDELKSLIKQNRDAKSNKDLNKLLTGFDTLAKAYDKSKTIFQRQNVTNPRFYIRFLVEIEDYVNKLWEDKEAKAALSKNNTKALSPLRQKLKKYIKDHGLTDLVSDYRANPDEDGYETPEDENDEDDFEEVPEASPGRQAERAADSESESDSDDDDSFNWSSEPDTNSSDDEENVTKMEQLRRYFLKKEFREESKDDKKDKRKRVIKVKEVVEEDDDDWTPVSREKSVVHFDPNEEVTHDVMIKKLNEVMSARGKRTTDRNQHVANLQKLLEVAEEKQLGLGISVKISFCIISALFELNAKISDYMEYETFMNTLRTVNTLLDLLITTDRVKLSVTYAEEDENLKDENEEYRIQGSILIAVQRLDGELAKILQNADCHSNDYIEKLKAEKDMCQLIEKAENYVELRNHLGIFDKHEVCKVYMMRIEHTYYKYQDQNVGEVAKTMDYLCNKIYTLDDEKRLRQRAMLCHVYFLAVHDKWHRARDLLLMSHMQAIVDHSDVDTQILYNRTICQLGLCAFRHGFIREAHQGLSEIQNTQRAKELLAQAVGTRPHEKTAEQEKIDRSRQVPYHMHINVELMECVYLICSMLLEIPHMASCEFEMRRRMLSRSFHYQLKQSEKASLTGPPENTREHVVAASKAMLNGDWKKCKDYIVNEKMNQKVWNLFHNADQVKDMVVRRIQEESLRTYLLTYSTVYSTVSLKKLASLFDLSKKDVHSIISKMIIQEELSATLDEPTDCLIMHRVEPSRLQMLALNLSDKLQTLAENNEQILEPRTGRGGYQGPGSWFPGRNERQGDKQKGSGGFQGERRGGPGGPDGKRGNWGSQGGQQRRHPQKPRAF.

Disordered regions lie at residues 1-28 (MSRF…KANK) and 162-235 (SDYR…VTKM). Composition is skewed to acidic residues over residues 12 to 22 (SDTDSSEDEVE), 169 to 189 (DEDG…EEVP), and 203 to 214 (SESESDSDDDDS). Residues 215-224 (FNWSSEPDTN) are compositionally biased toward polar residues. The 177-residue stretch at 625–801 (YHMHINVELM…DCLIMHRVEP (177 aa)) folds into the PCI domain. Positions 824-894 (QILEPRTGRG…RRHPQKPRAF (71 aa)) are disordered. The segment covering 845 to 854 (RNERQGDKQK) has biased composition (basic and acidic residues). A compositionally biased stretch (gly residues) spans 855–870 (GSGGFQGERRGGPGGP). Over residues 884–894 (QRRHPQKPRAF) the composition is skewed to basic residues.

The protein belongs to the eIF-3 subunit C family. As to quaternary structure, component of the eukaryotic translation initiation factor 3 (eIF-3) complex.

It localises to the cytoplasm. Component of the eukaryotic translation initiation factor 3 (eIF-3) complex, which is involved in protein synthesis of a specialized repertoire of mRNAs and, together with other initiation factors, stimulates binding of mRNA and methionyl-tRNAi to the 40S ribosome. The eIF-3 complex specifically targets and initiates translation of a subset of mRNAs involved in cell proliferation. The protein is Eukaryotic translation initiation factor 3 subunit C of Caenorhabditis briggsae.